A 457-amino-acid chain; its full sequence is Chromosomal replication initiator protein DnaA (457 aa).

A domain I, interacts with DnaA modulators region spans residues 1-71; it reads MSPSIWEKCL…LLKNFCNINT (71 aa). Positions 71 to 119 are domain II; that stretch reads TTPTLMLKICKPKIIQKKFFNELTLKKNILNSKLTYNVNTKLSNIIYSS. Positions 120 to 337 are domain III, AAA+ region; the sequence is EINTNYTFQN…GALNKILANS (218 aa). Residues glycine 165, glycine 167, lysine 168, and threonine 169 each coordinate ATP. Positions 338–457 are domain IV, binds dsDNA; the sequence is DSKKKIITIN…FLTLLKILSS (120 aa).

This sequence belongs to the DnaA family. Oligomerizes as a right-handed, spiral filament on DNA at oriC.

It is found in the cytoplasm. Functionally, plays an essential role in the initiation and regulation of chromosomal replication. ATP-DnaA binds to the origin of replication (oriC) to initiate formation of the DNA replication initiation complex once per cell cycle. Binds the DnaA box (a 9 base pair repeat at the origin) and separates the double-stranded (ds)DNA. Forms a right-handed helical filament on oriC DNA; dsDNA binds to the exterior of the filament while single-stranded (ss)DNA is stabiized in the filament's interior. The ATP-DnaA-oriC complex binds and stabilizes one strand of the AT-rich DNA unwinding element (DUE), permitting loading of DNA polymerase. After initiation quickly degrades to an ADP-DnaA complex that is not apt for DNA replication. Binds acidic phospholipids. The protein is Chromosomal replication initiator protein DnaA of Buchnera aphidicola subsp. Baizongia pistaciae (strain Bp).